Reading from the N-terminus, the 263-residue chain is uncharacterized protein (263 aa).

It belongs to the AtsA family.

It is found in the plastid. Its subcellular location is the chloroplast. This is an uncharacterized protein from Porphyra purpurea (Red seaweed).